The following is a 336-amino-acid chain: Cellodextrinase A (336 aa).

Catalysis depends on E141, which acts as the Proton donor.

This sequence belongs to the glycosyl hydrolase 5 (cellulase A) family.

It is found in the secreted. Functionally, crystalline cellulose degradation. This Ruminococcus flavefaciens protein is Cellodextrinase A (celA).